The sequence spans 73 residues: NADH dehydrogenase [ubiquinone] 1 beta subcomplex subunit 3-B (73 aa).

A helical membrane pass occupies residues 31 to 48 (ALPGLGIGVAAFCVYLVG).

This sequence belongs to the complex I NDUFB3 subunit family. Complex I is composed of at least 49 different subunits.

The protein localises to the mitochondrion inner membrane. Accessory subunit of the mitochondrial membrane respiratory chain NADH dehydrogenase (Complex I), that is believed not to be involved in catalysis. Complex I functions in the transfer of electrons from NADH to the respiratory chain. The immediate electron acceptor for the enzyme is believed to be ubiquinone. The polypeptide is NADH dehydrogenase [ubiquinone] 1 beta subcomplex subunit 3-B (Arabidopsis thaliana (Mouse-ear cress)).